The chain runs to 347 residues: Ferrochelatase (347 aa).

Position 158 (Cys158) interacts with [2Fe-2S] cluster. The Fe cation site is built by His193 and Glu272. Positions 332, 339, and 341 each coordinate [2Fe-2S] cluster.

Belongs to the ferrochelatase family. In terms of assembly, homodimer. [2Fe-2S] cluster is required as a cofactor.

It is found in the cytoplasm. The catalysed reaction is heme b + 2 H(+) = protoporphyrin IX + Fe(2+). The protein operates within porphyrin-containing compound metabolism; protoheme biosynthesis; protoheme from protoporphyrin-IX: step 1/1. Catalyzes the ferrous insertion into protoporphyrin IX. This chain is Ferrochelatase, found in Caulobacter vibrioides (strain ATCC 19089 / CIP 103742 / CB 15) (Caulobacter crescentus).